The following is a 780-amino-acid chain: Gelsolin (780 aa).

Met1 is modified (N-acetylmethionine; alternate). The signal sequence occupies residues Met1 to Ala25. Residues Val51 to Phe174 form an actin-severing region. The Gelsolin-like 1 repeat unit spans residues Phe74 to Phe155. Tyr84 is subject to Phosphotyrosine. Ca(2+) is bound by residues Gly90, Asp91, Glu122, Asp134, Gly139, and Ala141. Residues Asp121–Gly124 are actin-actin interfilament contact point. A 1,2-diacyl-sn-glycero-3-phospho-(1D-myo-inositol-4,5-bisphosphate) is bound at residue Lys160–Lys167. Residue Val170 participates in Ca(2+) binding. Arg186–Arg194 is a binding site for a 1,2-diacyl-sn-glycero-3-phospho-(1D-myo-inositol-4,5-bisphosphate). The Gelsolin-like 2 repeat unit spans residues Val196–Met268. 2 residues coordinate Ca(2+): Gly211 and Asp212. A disulfide bond links Cys213 and Cys226. Glu234 is a Ca(2+) binding site. The segment at Gly244–Leu269 is disordered. Residues Asp284, Glu327, Asp328, and Glu352 each coordinate Ca(2+). A Gelsolin-like 3 repeat occupies Asp315–Phe387. Phosphotyrosine occurs at positions 407 and 463. Positions Ala432–Ala780 are actin-binding, Ca-sensitive. Residues Ser453 to Met534 form a Gelsolin-like 4 repeat. Ca(2+) is bound by residues Gly469, Asp470, Glu500, Asp512, Gly517, Pro519, and Thr549. A Gelsolin-like 5 repeat occupies Arg575–Trp640. Lys582 is modified (N6-acetyllysine). Residues Asn589 and Asp590 each coordinate Ca(2+). The residue at position 601 (Tyr601) is a Phosphotyrosine. Residue Glu612 coordinates Ca(2+). Tyr649 bears the Phosphotyrosine mark. One copy of the Gelsolin-like 6 repeat lies at Ile679 to Phe754. Ca(2+)-binding residues include Asp694, Asp695, and Glu717. Position 740 is a phosphothreonine (Thr740).

It belongs to the villin/gelsolin family. In terms of assembly, binds to actin and to fibronectin. Identified in a complex composed of ACTA1, COBL, GSN and TMSB4X. Interacts with the inactive form of EIF2AK2/PKR. Interacts with FLII. Post-translationally, phosphorylated on tyrosine residues in vitro.

It localises to the cytoplasm. Its subcellular location is the cytoskeleton. The protein resides in the secreted. Functionally, calcium-regulated, actin-modulating protein that binds to the plus (or barbed) ends of actin monomers or filaments, preventing monomer exchange (end-blocking or capping). It can promote the assembly of monomers into filaments (nucleation) as well as sever filaments already formed. Plays a role in ciliogenesis. The chain is Gelsolin (Gsn) from Mus musculus (Mouse).